The following is a 228-amino-acid chain: Pyridoxamine 5'-phosphate oxidase (228 aa).

Pyridoxal 5'-phosphate is bound at residue 20-23; that stretch reads QYDK. Lysine 29 is covalently cross-linked (Glycyl lysine isopeptide (Lys-Gly) (interchain with G-Cter in ubiquitin)). 73 to 76 is an FMN binding site; sequence RILL. Residue lysine 78 coordinates pyridoxal 5'-phosphate. Residues 88-89, 95-96, and glutamine 118 each bind FMN; these read YS and RK. Positions 136, 140, and 144 each coordinate pyridoxal 5'-phosphate. FMN is bound by residues 153-154 and tryptophan 199; that span reads QS. Residue 205–207 participates in pyridoxal 5'-phosphate binding; the sequence is RLH. Arginine 209 serves as a coordination point for FMN.

Belongs to the pyridoxamine 5'-phosphate oxidase family. In terms of assembly, homodimer. It depends on FMN as a cofactor.

The protein localises to the mitochondrion intermembrane space. It catalyses the reaction pyridoxamine 5'-phosphate + O2 + H2O = pyridoxal 5'-phosphate + H2O2 + NH4(+). The catalysed reaction is pyridoxine 5'-phosphate + O2 = pyridoxal 5'-phosphate + H2O2. Its pathway is cofactor metabolism; pyridoxal 5'-phosphate salvage; pyridoxal 5'-phosphate from pyridoxamine 5'-phosphate: step 1/1. The protein operates within cofactor metabolism; pyridoxal 5'-phosphate salvage; pyridoxal 5'-phosphate from pyridoxine 5'-phosphate: step 1/1. In terms of biological role, catalyzes the oxidation of either pyridoxine 5'-phosphate (PNP) or pyridoxamine 5'-phosphate (PMP) into pyridoxal 5'-phosphate (PLP). The polypeptide is Pyridoxamine 5'-phosphate oxidase (PDX3) (Saccharomyces cerevisiae (strain ATCC 204508 / S288c) (Baker's yeast)).